The primary structure comprises 182 residues: Bifunctional protein PyrR (182 aa).

A PRPP-binding motif is present at residues 98–110 (VVLVDDVLFTGRS).

It belongs to the purine/pyrimidine phosphoribosyltransferase family. PyrR subfamily.

The enzyme catalyses UMP + diphosphate = 5-phospho-alpha-D-ribose 1-diphosphate + uracil. Its function is as follows. Regulates the transcription of the pyrimidine nucleotide (pyr) operon in response to exogenous pyrimidines. Functionally, also displays a weak uracil phosphoribosyltransferase activity which is not physiologically significant. The polypeptide is Bifunctional protein PyrR (Dehalococcoides mccartyi (strain ATCC BAA-2100 / JCM 16839 / KCTC 5957 / BAV1)).